Consider the following 498-residue polypeptide: MRINPTTSGSGVSTLEKKNLGRVVQIIGPVLDVAFPPGKMPNIYNALVVQGRDSVGQPINVACEVQQLLGNNRVRAVAMSATDGLTRGMEVIDKGAPISVPVGGATLGRIFNVLGEPVDNLGPVDTSTMSPIHRSAPAFIQLDTKLSIFETGIKVVDLLAPYRRGGKIGLFGGAGVGKTVLIMELINNIAKAHGGVSVFGGVGERTREGNDLYMEMKESGVINEENIAESKVALVYGQMNEPPGARMRVGLTALTMAEYFRDVNEQDVLLFIDNIFRFVQAGSEVSALLGRMPSAVGYQPTLSTEMGSLQERITSTKEGSITSIQAVYVPADDLTDPAPATTFAHLDATTVLSRGLAAKGIYPAVDPLDSTSTMLQPRIVGEEHYETAQRVKQTLQRYKELQDIIAILGLDELSEEDRLLVARARKIERFLSQPFFVAEVFTGSPGKYVGLAETIRGFQLILSGELDGLPEQAFYLVGNIDEATAKAMNLEMESNLKK.

172–179 lines the ATP pocket; sequence GGAGVGKT.

The protein belongs to the ATPase alpha/beta chains family. In terms of assembly, F-type ATPases have 2 components, CF(1) - the catalytic core - and CF(0) - the membrane proton channel. CF(1) has five subunits: alpha(3), beta(3), gamma(1), delta(1), epsilon(1). CF(0) has four main subunits: a(1), b(1), b'(1) and c(9-12).

The protein localises to the plastid. It localises to the chloroplast thylakoid membrane. The catalysed reaction is ATP + H2O + 4 H(+)(in) = ADP + phosphate + 5 H(+)(out). Produces ATP from ADP in the presence of a proton gradient across the membrane. The catalytic sites are hosted primarily by the beta subunits. The chain is ATP synthase subunit beta, chloroplastic from Atropa belladonna (Belladonna).